The following is a 417-amino-acid chain: Peptidyl-Asp metalloendopeptidase (417 aa).

Residues 1–25 form the signal peptide; the sequence is MLSRSIGKAAGGLVLGLSVAAAAHA. H327 lines the Zn(2+) pocket. Residue E328 is part of the active site. The Zn(2+) site is built by H331 and H337.

This sequence belongs to the peptidase M72 family. Requires Zn(2+) as cofactor.

It carries out the reaction Cleavage of Xaa-|-Asp, Xaa-|-Glu and Xaa-|-cysteic acid bonds.. Functionally, metalloprotease, specifically cleaves on the N-terminal side of aspartyl, glutamyl and cysteic acid residues. This Stenotrophomonas maltophilia (strain R551-3) protein is Peptidyl-Asp metalloendopeptidase.